The primary structure comprises 224 residues: Germin-like protein 8-11 (224 aa).

A signal peptide spans 1 to 22; the sequence is MASSSFLLLATLLAMASWQGMA. Cys-32 and Cys-47 are oxidised to a cystine. Residues 62 to 212 enclose the Cupin type-1 domain; the sequence is AMLDTPRKTN…AFQVEKGTID (151 aa). An N-linked (GlcNAc...) asparagine glycan is attached at Asn-76. His-109, His-111, Glu-116, and His-157 together coordinate Mn(2+).

This sequence belongs to the germin family. Oligomer (believed to be a pentamer but probably hexamer).

The protein resides in the secreted. It localises to the extracellular space. It is found in the apoplast. In terms of biological role, plays a role in broad-spectrum disease resistance. Probably has no oxalate oxidase activity even if the active site is conserved. This Oryza sativa subsp. japonica (Rice) protein is Germin-like protein 8-11.